The sequence spans 703 residues: Polyribonucleotide nucleotidyltransferase (703 aa).

2 residues coordinate Mg(2+): Asp-485 and Asp-491. One can recognise a KH domain in the interval 552 to 611 (PRAYTINIDTDKIRTLIGTGGKTINKIIEETGVKIDIREDGTVFVLSSDADSANRALKMI). In terms of domain architecture, S1 motif spans 621–689 (GEVYLGKVTK…NQGRVNLSRK (69 aa)).

It belongs to the polyribonucleotide nucleotidyltransferase family. The cofactor is Mg(2+).

The protein localises to the cytoplasm. The catalysed reaction is RNA(n+1) + phosphate = RNA(n) + a ribonucleoside 5'-diphosphate. Its function is as follows. Involved in mRNA degradation. Catalyzes the phosphorolysis of single-stranded polyribonucleotides processively in the 3'- to 5'-direction. The sequence is that of Polyribonucleotide nucleotidyltransferase from Clostridium acetobutylicum (strain ATCC 824 / DSM 792 / JCM 1419 / IAM 19013 / LMG 5710 / NBRC 13948 / NRRL B-527 / VKM B-1787 / 2291 / W).